The chain runs to 289 residues: Bidirectional sugar transporter SWEET11 (289 aa).

The Extracellular segment spans residues 1 to 9 (MSLFNTENT). Residues 10-30 (WAFVFGLLGNLISFAVFLSPV) traverse the membrane as a helical segment. The region spanning 12 to 98 (FVFGLLGNLI…SMFLAYAPKP (87 aa)) is the MtN3/slv 1 domain. Residues 31-43 (PTFYRIWKKKTTE) lie on the Cytoplasmic side of the membrane. Residues 44-64 (GFQSIPYVVALFSATLWLYYA) form a helical membrane-spanning segment. At 65–70 (TQKKDV) the chain is on the extracellular side. A helical transmembrane segment spans residues 71-91 (FLLVTINAFGCFIETIYISMF). Topologically, residues 92 to 105 (LAYAPKPARMLTVK) are cytoplasmic. Residues 106 to 126 (MLLLMNFGGFCAILLLCQFLV) traverse the membrane as a helical segment. Topologically, residues 127 to 133 (KGATRAK) are extracellular. A helical membrane pass occupies residues 134–154 (IIGGICVGFSVCVFAAPLSII). One can recognise a MtN3/slv 2 domain in the interval 134–218 (IIGGICVGFS…ILYVVYKYCK (85 aa)). Residues 155 to 167 (RTVIKTRSVEYMP) lie on the Cytoplasmic side of the membrane. The helical transmembrane segment at 168-188 (FSLSLTLTISAVIWLLYGLAL) threads the bilayer. Residues 189–192 (KDIY) lie on the Extracellular side of the membrane. The chain crosses the membrane as a helical span at residues 193–213 (VAFPNVLGFALGALQMILYVV). The Cytoplasmic portion of the chain corresponds to 214–289 (YKYCKTSPHL…GKQSSSAAAT (76 aa)). The segment at 266-289 (DRRAEIEDGQTPKHGKQSSSAAAT) is disordered. Threonine 276 carries the post-translational modification Phosphothreonine.

The protein belongs to the SWEET sugar transporter family. As to quaternary structure, forms homooligomers and heterooligomers with SWEET1, SWEET3, SWEET5, SWEET6, SWEET7, SWEET8, SWEET9, SWEET12, SWEET13, SWEET15 and SWEET17. As to expression, expressed in leaves, especially in phloem. Expressed in developing seeds.

Its subcellular location is the cell membrane. Mediates both low-affinity uptake and efflux of sugar across the plasma membrane. Involved in phloem loading by mediating export from parenchyma cells feeding H(+)-coupled import into the sieve element/companion cell complex, thus contributing to the sucrose migration from sites of synthesis in the mesophyll to the phloem. Contributes to seed filling by triggering sucrose efflux involved in the transfer of sugars from seed coat to embryos. The protein is Bidirectional sugar transporter SWEET11 of Arabidopsis thaliana (Mouse-ear cress).